A 493-amino-acid polypeptide reads, in one-letter code: Guanosine-5'-triphosphate,3'-diphosphate pyrophosphatase (493 aa).

It belongs to the GppA/Ppx family. GppA subfamily.

It catalyses the reaction guanosine 3'-diphosphate 5'-triphosphate + H2O = guanosine 3',5'-bis(diphosphate) + phosphate + H(+). Its pathway is purine metabolism; ppGpp biosynthesis; ppGpp from GTP: step 2/2. In terms of biological role, catalyzes the conversion of pppGpp to ppGpp. Guanosine pentaphosphate (pppGpp) is a cytoplasmic signaling molecule which together with ppGpp controls the 'stringent response', an adaptive process that allows bacteria to respond to amino acid starvation, resulting in the coordinated regulation of numerous cellular activities. The protein is Guanosine-5'-triphosphate,3'-diphosphate pyrophosphatase of Salmonella paratyphi A (strain ATCC 9150 / SARB42).